A 795-amino-acid chain; its full sequence is Lon protease (795 aa).

Positions 7-213 (SQILVVRGQV…KIIQAGIEDL (207 aa)) constitute a Lon N-terminal domain. An ATP-binding site is contributed by 379–386 (GPPGVGKS). The region spanning 615–795 (VSLPGIVNGM…YSDIYNKLFS (181 aa)) is the Lon proteolytic domain. Catalysis depends on residues S702 and K745.

Belongs to the peptidase S16 family. In terms of assembly, homohexamer. Organized in a ring with a central cavity.

The protein localises to the cytoplasm. The catalysed reaction is Hydrolysis of proteins in presence of ATP.. In terms of biological role, ATP-dependent serine protease that mediates the selective degradation of mutant and abnormal proteins as well as certain short-lived regulatory proteins. Required for cellular homeostasis and for survival from DNA damage and developmental changes induced by stress. Degrades polypeptides processively to yield small peptide fragments that are 5 to 10 amino acids long. Binds to DNA in a double-stranded, site-specific manner. The sequence is that of Lon protease from Mycoplasma genitalium (strain ATCC 33530 / DSM 19775 / NCTC 10195 / G37) (Mycoplasmoides genitalium).